We begin with the raw amino-acid sequence, 1135 residues long: Protocadherin-18 (1135 aa).

Residues 1 to 27 (MHQMNAKMHFRFVFALLIVSFNHDVLG) form the signal peptide. Cadherin domains are found at residues 28 to 137 (KNLK…SPQF), 138 to 246 (SRSL…SPAF), 247 to 354 (EQQS…KPEI), 361 to 465 (PGKE…PPHF), 466 to 576 (QRSR…VPVV), and 582 to 688 (RNNT…STAM). The Extracellular segment spans residues 28-699 (KNLKYRIYEE…SVSQASLDVS (672 aa)). A glycan (N-linked (GlcNAc...) asparagine) is linked at N103. N269, N420, N559, N583, and N641 each carry an N-linked (GlcNAc...) asparagine glycan. The helical transmembrane segment at 700–720 (MIIIISLGAICAVLLVIMVLF) threads the bilayer. Over 721 to 1135 (ATRCNREKKD…NKLLQDVRQS (415 aa)) the chain is Cytoplasmic. 4 disordered regions span residues 769 to 800 (LPIR…NSHQ), 869 to 889 (SLKD…DLGR), 942 to 1003 (DYRS…STSS), and 1023 to 1046 (YSEC…PAKT). Positions 791–800 (GSRQSHNSHQ) are enriched in polar residues. Over residues 869 to 878 (SLKDSGRGDS) the composition is skewed to basic and acidic residues. The segment at 893–1135 (IDRLLGEGFS…NKLLQDVRQS (243 aa)) is interaction with DAB1. Residues 1028–1039 (EVDRSNSLERRK) show a composition bias toward basic and acidic residues.

Interacts with DAB1. In terms of tissue distribution, expressed in all tissues, with highest expression in lung and ovary.

It localises to the cell membrane. Its function is as follows. Potential calcium-dependent cell-adhesion protein. The chain is Protocadherin-18 (PCDH18) from Homo sapiens (Human).